The primary structure comprises 201 residues: MTDISAVAGQPALVRNELNLVWLDMEMTGLDPDTDRIIEIAVVVTNSTLDIAVEGPVLAIHQSDETLAKMDDWNKNTHGRSGLIDRVRASSVTEADAAAQIAAFLAEHVPPGKSPMCGNSICQDRRFMARWMPELERFFHYRNLDVSTLKELCRRWQPAIYKGFQKRAMHTALADIHESIDELKYYRERFLIPAAPAGETA.

The region spanning 20–183 is the Exonuclease domain; the sequence is LVWLDMEMTG…ADIHESIDEL (164 aa). Tyr-141 is an active-site residue.

This sequence belongs to the oligoribonuclease family.

The protein resides in the cytoplasm. 3'-to-5' exoribonuclease specific for small oligoribonucleotides. This Burkholderia mallei (strain NCTC 10229) protein is Oligoribonuclease.